Consider the following 699-residue polypeptide: Elongation factor G (699 aa).

Positions 8–287 constitute a tr-type G domain; sequence EKLRNIGIVA…AVIDYLPSPI (280 aa). Residues 17-24, 85-89, and 139-142 each bind GTP; these read AHIDAGKT, DTPGH, and NKMD.

Belongs to the TRAFAC class translation factor GTPase superfamily. Classic translation factor GTPase family. EF-G/EF-2 subfamily.

The protein resides in the cytoplasm. In terms of biological role, catalyzes the GTP-dependent ribosomal translocation step during translation elongation. During this step, the ribosome changes from the pre-translocational (PRE) to the post-translocational (POST) state as the newly formed A-site-bound peptidyl-tRNA and P-site-bound deacylated tRNA move to the P and E sites, respectively. Catalyzes the coordinated movement of the two tRNA molecules, the mRNA and conformational changes in the ribosome. This is Elongation factor G (fusA) from Aquifex aeolicus (strain VF5).